A 454-amino-acid polypeptide reads, in one-letter code: Tetrahydroanabasine acetyltransferase (454 aa).

Catalysis depends on proton acceptor residues His164 and Asp389.

The protein belongs to the plant acyltransferase family. As to quaternary structure, monomer.

It carries out the reaction tetrahydroanabasine + acetyl-CoA = ammodendrine + CoA. It functions in the pathway alkaloid biosynthesis. Its function is as follows. Tetrahydroanabasine acetyltransferase involved in the accumulation of quinolizidine type antinutritional alkaloids (QAs) natural products. QAs impart a bitter taste to plants, acting as repellents and toxicants for herbivores and predators, and possess a variety of pharmacological effects, including sedative, anticonvulsant, anti-inflammatory, antiviral, antitumor, antipyretic, anti-hepatitis B, antifibrotic, antiallergic, antidiarrheal, analgesic and antimicrobial activities. Mediates the conversion of tetrahydroanabasine into ammodendrine. This Lupinus albus (White lupine) protein is Tetrahydroanabasine acetyltransferase.